We begin with the raw amino-acid sequence, 514 residues long: Lysine--tRNA ligase (514 aa).

Positions 422 and 429 each coordinate Mg(2+).

This sequence belongs to the class-II aminoacyl-tRNA synthetase family. Homodimer. Requires Mg(2+) as cofactor.

The protein resides in the cytoplasm. It catalyses the reaction tRNA(Lys) + L-lysine + ATP = L-lysyl-tRNA(Lys) + AMP + diphosphate. This Psychrobacter arcticus (strain DSM 17307 / VKM B-2377 / 273-4) protein is Lysine--tRNA ligase.